The sequence spans 318 residues: Deacetoxycephalosporin C hydroxylase (318 aa).

The Fe2OG dioxygenase domain occupies 158–271 (DADPVLRLRY…RTSSVFFLRP (114 aa)).

This sequence belongs to the iron/ascorbate-dependent oxidoreductase family. In terms of assembly, monomer. The cofactor is Fe cation.

It carries out the reaction deacetoxycephalosporin C + 2-oxoglutarate + O2 = deacetylcephalosporin C + succinate + CO2. It participates in antibiotic biosynthesis; cephalosporin C biosynthesis. Functionally, hydroxylation of desacetoxicephalosporin C in 3'position to form deacetylcephalosporin C. This Streptomyces clavuligerus protein is Deacetoxycephalosporin C hydroxylase (cefF).